We begin with the raw amino-acid sequence, 240 residues long: DNA repair protein RecO (240 aa).

This sequence belongs to the RecO family.

Functionally, involved in DNA repair and RecF pathway recombination. The protein is DNA repair protein RecO of Actinobacillus pleuropneumoniae serotype 5b (strain L20).